Here is a 462-residue protein sequence, read N- to C-terminus: Glutamate--tRNA ligase 2 (462 aa).

The short motif at 8 to 18 (PSPTGYLHIGG) is the 'HIGH' region element. The short motif at 236-240 (KLSKR) is the 'KMSKS' region element. Position 239 (lysine 239) interacts with ATP.

The protein belongs to the class-I aminoacyl-tRNA synthetase family. Glutamate--tRNA ligase type 1 subfamily. As to quaternary structure, monomer.

The protein resides in the cytoplasm. The enzyme catalyses tRNA(Glu) + L-glutamate + ATP = L-glutamyl-tRNA(Glu) + AMP + diphosphate. Its function is as follows. Catalyzes the attachment of glutamate to tRNA(Glu) in a two-step reaction: glutamate is first activated by ATP to form Glu-AMP and then transferred to the acceptor end of tRNA(Glu). The protein is Glutamate--tRNA ligase 2 of Nitratiruptor sp. (strain SB155-2).